A 486-amino-acid chain; its full sequence is Cardiolipin synthase A (486 aa).

2 helical membrane passes run 3 to 23 (IFYD…IANI) and 38 to 58 (MSWL…WFFF). PLD phosphodiesterase domains follow at residues 219-246 (LDVR…VDPY) and 399-426 (KKGL…DMRS). Residues histidine 224, lysine 226, aspartate 231, histidine 404, lysine 406, and aspartate 411 contribute to the active site.

Belongs to the phospholipase D family. Cardiolipin synthase subfamily. ClsA sub-subfamily.

It localises to the cell inner membrane. The catalysed reaction is 2 a 1,2-diacyl-sn-glycero-3-phospho-(1'-sn-glycerol) = a cardiolipin + glycerol. Catalyzes the reversible phosphatidyl group transfer from one phosphatidylglycerol molecule to another to form cardiolipin (CL) (diphosphatidylglycerol) and glycerol. In Buchnera aphidicola subsp. Schizaphis graminum (strain Sg), this protein is Cardiolipin synthase A.